The following is a 284-amino-acid chain: Tropomyosin beta chain (284 aa).

Methionine 1 is modified (N-acetylmethionine). The disordered stretch occupies residues 1 to 78 (MDAIKKKMQM…EKLEQAEKKA (78 aa)). The stretch at 1 to 284 (MDAIKKKMQM…DNALNDITSL (284 aa)) forms a coiled coil. Basic and acidic residues-rich tracts occupy residues 12–40 (KLDK…KQLE) and 51–78 (KGTE…EKKA). At threonine 53 the chain carries Phosphothreonine. A Phosphoserine; by PIK3CG modification is found at serine 61. Residue threonine 79 is modified to Phosphothreonine. Serine 87 bears the Phosphoserine mark. Threonine 108 carries the post-translational modification Phosphothreonine. Positions 117–136 (EKAADESERGMKVIENRAMK) are disordered. Phosphoserine occurs at positions 158, 206, and 215. Threonine 252 carries the phosphothreonine modification. Position 261 is a phosphotyrosine (tyrosine 261). A Phosphoserine modification is found at serine 271. The residue at position 282 (threonine 282) is a Phosphothreonine. A Phosphoserine modification is found at serine 283.

The protein belongs to the tropomyosin family. Homodimer. Heterodimer of an alpha (TPM1, TPM3 or TPM4) and a beta (TPM2) chain. In terms of processing, phosphorylated on Ser-61 by PIK3CG. Phosphorylation on Ser-61 is required for ADRB2 internalization.

Its subcellular location is the cytoplasm. It localises to the cytoskeleton. Functionally, binds to actin filaments in muscle and non-muscle cells. Plays a central role, in association with the troponin complex, in the calcium dependent regulation of vertebrate striated muscle contraction. Smooth muscle contraction is regulated by interaction with caldesmon. In non-muscle cells is implicated in stabilizing cytoskeleton actin filaments. The non-muscle isoform may have a role in agonist-mediated receptor internalization. The polypeptide is Tropomyosin beta chain (Tpm2) (Mus musculus (Mouse)).